A 330-amino-acid polypeptide reads, in one-letter code: Aspartate--ammonia ligase (330 aa).

This sequence belongs to the class-II aminoacyl-tRNA synthetase family. AsnA subfamily.

It localises to the cytoplasm. The enzyme catalyses L-aspartate + NH4(+) + ATP = L-asparagine + AMP + diphosphate + H(+). It participates in amino-acid biosynthesis; L-asparagine biosynthesis; L-asparagine from L-aspartate (ammonia route): step 1/1. The protein is Aspartate--ammonia ligase of Streptococcus agalactiae serotype Ia (strain ATCC 27591 / A909 / CDC SS700).